A 442-amino-acid polypeptide reads, in one-letter code: Histidine--tRNA ligase (442 aa).

The protein belongs to the class-II aminoacyl-tRNA synthetase family. In terms of assembly, homodimer.

Its subcellular location is the cytoplasm. The enzyme catalyses tRNA(His) + L-histidine + ATP = L-histidyl-tRNA(His) + AMP + diphosphate + H(+). The protein is Histidine--tRNA ligase of Helicobacter hepaticus (strain ATCC 51449 / 3B1).